Here is a 312-residue protein sequence, read N- to C-terminus: Pantothenate kinase (312 aa).

An ATP-binding site is contributed by 97–104 (GSVAVGKS).

The protein belongs to the prokaryotic pantothenate kinase family.

The protein localises to the cytoplasm. The enzyme catalyses (R)-pantothenate + ATP = (R)-4'-phosphopantothenate + ADP + H(+). Its pathway is cofactor biosynthesis; coenzyme A biosynthesis; CoA from (R)-pantothenate: step 1/5. The chain is Pantothenate kinase from Corynebacterium glutamicum (strain ATCC 13032 / DSM 20300 / JCM 1318 / BCRC 11384 / CCUG 27702 / LMG 3730 / NBRC 12168 / NCIMB 10025 / NRRL B-2784 / 534).